The primary structure comprises 397 residues: MSKILAINAGSSSLKFQLFEMPSETVLTKGIVERIGFDDAIFTITVNGEKIQEVTAIPNHAVAVKMLLDKLISHGIIRSFDEIDGIGHRVVHGGEKFSDSVLITDEVLKQIEEVSELAPLHNPANIVGIKAFQEVLPNVPAVAVFDTAFHQTMPEQSFLYSLPYEYYTKFGIRKYGFHGTSHKYVTQRAAELLGRPIEQLRLISCHLGNGASIAAVEGGKSIDTSMGFTPLAGVAMGTRSGNIDPALIPYIMQKTGMTADEVLEVLNKKSGMLGISGISSDLRDLEKAAAEGNKRAELALEVFANRIHKYIGSYAARMCGVDAIIFTAGIGENSEVIRAKVLRGLEFMGVYWDPALNKVRGKEAFISYPHSPVKVLVIPTNEEVMIARDVVRLANIG.

A Mg(2+)-binding site is contributed by Asn-8. Residue Lys-15 participates in ATP binding. Arg-89 contributes to the substrate binding site. The Proton donor/acceptor role is filled by Asp-146. Residues 206 to 210, 281 to 283, and 329 to 333 contribute to the ATP site; these read HLGNG, DLR, and GIGEN. Glu-382 lines the Mg(2+) pocket.

The protein belongs to the acetokinase family. Homodimer. It depends on Mg(2+) as a cofactor. Requires Mn(2+) as cofactor.

It localises to the cytoplasm. It carries out the reaction acetate + ATP = acetyl phosphate + ADP. The protein operates within metabolic intermediate biosynthesis; acetyl-CoA biosynthesis; acetyl-CoA from acetate: step 1/2. Catalyzes the formation of acetyl phosphate from acetate and ATP. Can also catalyze the reverse reaction. The chain is Acetate kinase from Geobacillus sp. (strain WCH70).